The chain runs to 65 residues: Ferredoxin-1 (65 aa).

The 29-residue stretch at 3-31 (RKFYVDQDECIACESCVEIAPGAFAMDPE) folds into the 4Fe-4S ferredoxin-type domain. Residues cysteine 12, cysteine 15, cysteine 18, and cysteine 55 each coordinate [4Fe-4S] cluster.

As to quaternary structure, homodimer. The cofactor is [4Fe-4S] cluster.

In terms of biological role, ferredoxins are iron-sulfur proteins that transfer electrons in a wide variety of metabolic reactions. The chain is Ferredoxin-1 (fd1) from Desulfocurvibacter africanus (Desulfovibrio africanus).